Here is a 432-residue protein sequence, read N- to C-terminus: Putative cyclin-F1-4 (432 aa).

Belongs to the cyclin family. Cyclin F subfamily.

This chain is Putative cyclin-F1-4 (CycF1-4), found in Oryza sativa subsp. japonica (Rice).